Reading from the N-terminus, the 313-residue chain is D-alanine--D-alanine ligase (313 aa).

An ATP-grasp domain is found at 108–308 (KLVWQQTGVP…YSELVVKVLS (201 aa)). 138–193 (VAKLGLPLFVKPASEGSSVAVLKVKTADALPAALSEAATHDKIVIVEKSIEGGGEY) is a binding site for ATP. Mg(2+)-binding residues include aspartate 262, glutamate 275, and asparagine 277.

The protein belongs to the D-alanine--D-alanine ligase family. The cofactor is Mg(2+). Mn(2+) is required as a cofactor.

The protein localises to the cytoplasm. It carries out the reaction 2 D-alanine + ATP = D-alanyl-D-alanine + ADP + phosphate + H(+). It functions in the pathway cell wall biogenesis; peptidoglycan biosynthesis. Functionally, cell wall formation. The chain is D-alanine--D-alanine ligase from Burkholderia ambifaria (strain MC40-6).